Consider the following 445-residue polypeptide: Phosphoglucosamine mutase (445 aa).

Ser102 acts as the Phosphoserine intermediate in catalysis. Positions 102, 241, 243, and 245 each coordinate Mg(2+). Phosphoserine is present on Ser102.

It belongs to the phosphohexose mutase family. Mg(2+) is required as a cofactor. Post-translationally, activated by phosphorylation.

The enzyme catalyses alpha-D-glucosamine 1-phosphate = D-glucosamine 6-phosphate. In terms of biological role, catalyzes the conversion of glucosamine-6-phosphate to glucosamine-1-phosphate. The chain is Phosphoglucosamine mutase from Sodalis glossinidius (strain morsitans).